Consider the following 218-residue polypeptide: Thiopurine S-methyltransferase (218 aa).

Positions 10, 45, 66, and 123 each coordinate S-adenosyl-L-methionine.

This sequence belongs to the class I-like SAM-binding methyltransferase superfamily. TPMT family.

It localises to the cytoplasm. The catalysed reaction is S-adenosyl-L-methionine + a thiopurine = S-adenosyl-L-homocysteine + a thiopurine S-methylether.. The chain is Thiopurine S-methyltransferase from Shewanella sp. (strain W3-18-1).